A 199-amino-acid polypeptide reads, in one-letter code: NADH-quinone oxidoreductase subunit I (199 aa).

2 consecutive 4Fe-4S ferredoxin-type domains span residues 45–75 (LNRHPDGLEKCIGCELCAWACPADAIYVEGA) and 91–120 (RVYQINYLRCIFCGYCIEACPTRALTMSNE). [4Fe-4S] cluster is bound by residues cysteine 55, cysteine 58, cysteine 61, cysteine 65, cysteine 100, cysteine 103, cysteine 106, and cysteine 110. Residues 164 to 199 (GTPAAHMLSGEDDAASETTLDRSDDHSATYEEAERP) form a disordered region. The span at 182–199 (TLDRSDDHSATYEEAERP) shows a compositional bias: basic and acidic residues.

It belongs to the complex I 23 kDa subunit family. In terms of assembly, NDH-1 is composed of 14 different subunits. Subunits NuoA, H, J, K, L, M, N constitute the membrane sector of the complex. [4Fe-4S] cluster is required as a cofactor.

Its subcellular location is the cell membrane. It catalyses the reaction a quinone + NADH + 5 H(+)(in) = a quinol + NAD(+) + 4 H(+)(out). Its function is as follows. NDH-1 shuttles electrons from NADH, via FMN and iron-sulfur (Fe-S) centers, to quinones in the respiratory chain. The immediate electron acceptor for the enzyme in this species is believed to be ubiquinone. Couples the redox reaction to proton translocation (for every two electrons transferred, four hydrogen ions are translocated across the cytoplasmic membrane), and thus conserves the redox energy in a proton gradient. This chain is NADH-quinone oxidoreductase subunit I, found in Acidothermus cellulolyticus (strain ATCC 43068 / DSM 8971 / 11B).